Consider the following 152-residue polypeptide: Superoxide dismutase [Cu-Zn] (152 aa).

Cu cation contacts are provided by His-45, His-47, and His-62. An intrachain disulfide couples Cys-56 to Cys-145. Zn(2+) is bound by residues His-62, His-70, His-79, and Asp-82. His-119 contacts Cu cation.

This sequence belongs to the Cu-Zn superoxide dismutase family. Homodimer. Cu cation serves as cofactor. Zn(2+) is required as a cofactor.

Its subcellular location is the cytoplasm. The catalysed reaction is 2 superoxide + 2 H(+) = H2O2 + O2. Functionally, destroys radicals which are normally produced within the cells and which are toxic to biological systems. This is Superoxide dismutase [Cu-Zn] (SODCC) from Brassica oleracea var. capitata (Cabbage).